Consider the following 310-residue polypeptide: Olfactory receptor 2A7 (310 aa).

Over 1-24 the chain is Extracellular; it reads MGNNMTLITEFILLGFPLSPRMQM. Asn4 carries N-linked (GlcNAc...) asparagine glycosylation. A helical transmembrane segment spans residues 25-45; that stretch reads LLFALFSLFYAFTLLGNGTIV. Residues 46–53 lie on the Cytoplasmic side of the membrane; the sequence is GLICLDSR. Residues 54-74 traverse the membrane as a helical segment; sequence LHTPMYFFLSHLAIVDIAYAC. Over 75–96 the chain is Extracellular; the sequence is NTVPQMLVNLLDPVKPISYAGC. Residues Cys96 and Cys178 are joined by a disulfide bond. Residues 97–117 form a helical membrane-spanning segment; the sequence is MTQTFLFLTFAITECLLLVVM. Over 118-148 the chain is Cytoplasmic; that stretch reads SYDRYVAICHPLRYSAIMSWRVCSTMAVTSW. Residues 149-169 traverse the membrane as a helical segment; sequence IIGVLLSLIHLVLLLPLPFCV. At 170–204 the chain is on the extracellular side; it reads SQKVNHFFCEITAILKLACADTHLNETMVLAGAVS. N-linked (GlcNAc...) asparagine glycosylation is present at Asn194. Residues 205 to 225 traverse the membrane as a helical segment; the sequence is VLVGPFSSIVVSYACILGAIL. Residues 226–239 are Cytoplasmic-facing; sequence KIQSEEGQRKAFST. The helical transmembrane segment at 240 to 260 threads the bilayer; it reads CSSHLCVVGLFYGTAIVMYVG. At 261–273 the chain is on the extracellular side; sequence PRHGSPKEQKKYL. A helical membrane pass occupies residues 274 to 291; the sequence is LLFHSLFNPMLNPLIYSL. The Cytoplasmic segment spans residues 292–310; that stretch reads RNSDVKNTLKRVLRTQRAL.

It belongs to the G-protein coupled receptor 1 family. As to expression, olfactory epithelium.

The protein localises to the cell membrane. Its function is as follows. Odorant receptor. In Mus musculus (Mouse), this protein is Olfactory receptor 2A7.